Reading from the N-terminus, the 26-residue chain is Dermaseptin-J4 (26 aa).

V26 is modified (valine amide).

Expressed by the skin glands.

The protein localises to the secreted. Its function is as follows. Has antimicrobial activity. The polypeptide is Dermaseptin-J4 (Phasmahyla jandaia (Jandaia leaf frog)).